The primary structure comprises 142 residues: Holo-[acyl-carrier-protein] synthase (142 aa).

2 residues coordinate Mg(2+): Asp8 and Glu57.

This sequence belongs to the P-Pant transferase superfamily. AcpS family. Mg(2+) serves as cofactor.

The protein resides in the cytoplasm. The enzyme catalyses apo-[ACP] + CoA = holo-[ACP] + adenosine 3',5'-bisphosphate + H(+). In terms of biological role, transfers the 4'-phosphopantetheine moiety from coenzyme A to a Ser of acyl-carrier-protein. This is Holo-[acyl-carrier-protein] synthase from Ruegeria sp. (strain TM1040) (Silicibacter sp.).